We begin with the raw amino-acid sequence, 333 residues long: Ribosomal RNA small subunit methyltransferase C (333 aa).

The protein belongs to the methyltransferase superfamily. RsmC family. In terms of assembly, monomer.

It is found in the cytoplasm. It carries out the reaction guanosine(1207) in 16S rRNA + S-adenosyl-L-methionine = N(2)-methylguanosine(1207) in 16S rRNA + S-adenosyl-L-homocysteine + H(+). In terms of biological role, specifically methylates the guanine in position 1207 of 16S rRNA in the 30S particle. This is Ribosomal RNA small subunit methyltransferase C from Chromohalobacter salexigens (strain ATCC BAA-138 / DSM 3043 / CIP 106854 / NCIMB 13768 / 1H11).